A 248-amino-acid polypeptide reads, in one-letter code: Proteasome subunit alpha (248 aa).

The tract at residues 229–248 (LLEADGATTEAESSAEEEDE) is disordered.

The protein belongs to the peptidase T1A family. The 20S proteasome core is composed of 14 alpha and 14 beta subunits that assemble into four stacked heptameric rings, resulting in a barrel-shaped structure. The two inner rings, each composed of seven catalytic beta subunits, are sandwiched by two outer rings, each composed of seven alpha subunits. The catalytic chamber with the active sites is on the inside of the barrel. Has a gated structure, the ends of the cylinder being occluded by the N-termini of the alpha-subunits. Is capped by the proteasome-associated ATPase, ARC.

Its subcellular location is the cytoplasm. Its pathway is protein degradation; proteasomal Pup-dependent pathway. With respect to regulation, the formation of the proteasomal ATPase ARC-20S proteasome complex, likely via the docking of the C-termini of ARC into the intersubunit pockets in the alpha-rings, may trigger opening of the gate for substrate entry. Interconversion between the open-gate and close-gate conformations leads to a dynamic regulation of the 20S proteasome proteolysis activity. Its function is as follows. Component of the proteasome core, a large protease complex with broad specificity involved in protein degradation. In Streptomyces scabiei (strain 87.22), this protein is Proteasome subunit alpha.